A 144-amino-acid polypeptide reads, in one-letter code: Large ribosomal subunit protein uL16 (144 aa).

It belongs to the universal ribosomal protein uL16 family. In terms of assembly, part of the 50S ribosomal subunit.

In terms of biological role, binds 23S rRNA and is also seen to make contacts with the A and possibly P site tRNAs. The polypeptide is Large ribosomal subunit protein uL16 (Erythrobacter litoralis (strain HTCC2594)).